A 416-amino-acid chain; its full sequence is Serine hydroxymethyltransferase (416 aa).

(6S)-5,6,7,8-tetrahydrofolate-binding positions include L121 and 125-127; that span reads GHL. K229 bears the N6-(pyridoxal phosphate)lysine mark.

It belongs to the SHMT family. As to quaternary structure, homodimer. Pyridoxal 5'-phosphate is required as a cofactor.

It is found in the cytoplasm. The catalysed reaction is (6R)-5,10-methylene-5,6,7,8-tetrahydrofolate + glycine + H2O = (6S)-5,6,7,8-tetrahydrofolate + L-serine. It functions in the pathway one-carbon metabolism; tetrahydrofolate interconversion. Its pathway is amino-acid biosynthesis; glycine biosynthesis; glycine from L-serine: step 1/1. Its function is as follows. Catalyzes the reversible interconversion of serine and glycine with tetrahydrofolate (THF) serving as the one-carbon carrier. This reaction serves as the major source of one-carbon groups required for the biosynthesis of purines, thymidylate, methionine, and other important biomolecules. Also exhibits THF-independent aldolase activity toward beta-hydroxyamino acids, producing glycine and aldehydes, via a retro-aldol mechanism. This Azoarcus sp. (strain BH72) protein is Serine hydroxymethyltransferase.